Reading from the N-terminus, the 594-residue chain is Probable translation initiation factor IF-2 (594 aa).

The region spanning 3–220 (IRSPIVSVLG…MLMGLAQQYL (218 aa)) is the tr-type G domain. A G1 region spans residues 12-19 (GHVDHGKT). 12–19 (GHVDHGKT) contributes to the GTP binding site. The G2 stretch occupies residues 37–41 (GITQH). The tract at residues 76 to 79 (DTPG) is G3. GTP is bound by residues 76–80 (DTPGH) and 130–133 (NKID). The tract at residues 130–133 (NKID) is G4. The G5 stretch occupies residues 198–200 (SAI).

It belongs to the TRAFAC class translation factor GTPase superfamily. Classic translation factor GTPase family. IF-2 subfamily.

Its function is as follows. Function in general translation initiation by promoting the binding of the formylmethionine-tRNA to ribosomes. Seems to function along with eIF-2. This is Probable translation initiation factor IF-2 (infB) from Methanothermobacter thermautotrophicus (strain ATCC 29096 / DSM 1053 / JCM 10044 / NBRC 100330 / Delta H) (Methanobacterium thermoautotrophicum).